Reading from the N-terminus, the 216-residue chain is Redox-sensing transcriptional repressor Rex 1 (216 aa).

Positions 16-55 (LYYRYLRMLHDTGKNKVSSTELSEAVQVDSATIRRDFSYF) form a DNA-binding region, H-T-H motif. Residue 90-95 (GVGNLG) coordinates NAD(+).

The protein belongs to the transcriptional regulatory Rex family. Homodimer.

The protein resides in the cytoplasm. Functionally, modulates transcription in response to changes in cellular NADH/NAD(+) redox state. The chain is Redox-sensing transcriptional repressor Rex 1 from Enterococcus faecalis (strain ATCC 700802 / V583).